Here is a 428-residue protein sequence, read N- to C-terminus: Bifunctional protein GlmU (428 aa).

The tract at residues 1-221 (MDIVILAAGC…ERKAMGINTR (221 aa)) is pyrophosphorylase. Residues 6–9 (LAAG), Lys20, Gln74, 79–80 (GT), 103–105 (YGD), Gly140, and Asn219 contribute to the UDP-N-acetyl-alpha-D-glucosamine site. Residue Asp105 coordinates Mg(2+). Residue Asn219 participates in Mg(2+) binding. Residues 222–242 (ADLAIAESYFQCMKRASFLQS) form a linker region. Residues 243 to 428 (GVTLTSPDQV…TTKPEYKTRR (186 aa)) are N-acetyltransferase. Arg308 and Lys326 together coordinate UDP-N-acetyl-alpha-D-glucosamine. The active-site Proton acceptor is His338. Tyr341 and Asn352 together coordinate UDP-N-acetyl-alpha-D-glucosamine. Residues Ala355, 361-362 (NY), Ala398, and Arg415 each bind acetyl-CoA.

It in the N-terminal section; belongs to the N-acetylglucosamine-1-phosphate uridyltransferase family. In the C-terminal section; belongs to the transferase hexapeptide repeat family. As to quaternary structure, homotrimer. The cofactor is Mg(2+).

Its subcellular location is the cytoplasm. It carries out the reaction alpha-D-glucosamine 1-phosphate + acetyl-CoA = N-acetyl-alpha-D-glucosamine 1-phosphate + CoA + H(+). The enzyme catalyses N-acetyl-alpha-D-glucosamine 1-phosphate + UTP + H(+) = UDP-N-acetyl-alpha-D-glucosamine + diphosphate. It participates in nucleotide-sugar biosynthesis; UDP-N-acetyl-alpha-D-glucosamine biosynthesis; N-acetyl-alpha-D-glucosamine 1-phosphate from alpha-D-glucosamine 6-phosphate (route II): step 2/2. It functions in the pathway nucleotide-sugar biosynthesis; UDP-N-acetyl-alpha-D-glucosamine biosynthesis; UDP-N-acetyl-alpha-D-glucosamine from N-acetyl-alpha-D-glucosamine 1-phosphate: step 1/1. Its pathway is bacterial outer membrane biogenesis; LPS lipid A biosynthesis. Functionally, catalyzes the last two sequential reactions in the de novo biosynthetic pathway for UDP-N-acetylglucosamine (UDP-GlcNAc). The C-terminal domain catalyzes the transfer of acetyl group from acetyl coenzyme A to glucosamine-1-phosphate (GlcN-1-P) to produce N-acetylglucosamine-1-phosphate (GlcNAc-1-P), which is converted into UDP-GlcNAc by the transfer of uridine 5-monophosphate (from uridine 5-triphosphate), a reaction catalyzed by the N-terminal domain. The protein is Bifunctional protein GlmU of Anaplasma marginale (strain Florida).